We begin with the raw amino-acid sequence, 416 residues long: Gamma-glutamyl phosphate reductase (416 aa).

This sequence belongs to the gamma-glutamyl phosphate reductase family.

The protein resides in the cytoplasm. The enzyme catalyses L-glutamate 5-semialdehyde + phosphate + NADP(+) = L-glutamyl 5-phosphate + NADPH + H(+). Its pathway is amino-acid biosynthesis; L-proline biosynthesis; L-glutamate 5-semialdehyde from L-glutamate: step 2/2. Its function is as follows. Catalyzes the NADPH-dependent reduction of L-glutamate 5-phosphate into L-glutamate 5-semialdehyde and phosphate. The product spontaneously undergoes cyclization to form 1-pyrroline-5-carboxylate. This Salmonella paratyphi A (strain AKU_12601) protein is Gamma-glutamyl phosphate reductase.